Here is a 401-residue protein sequence, read N- to C-terminus: Tyrosine--tRNA ligase (401 aa).

The 'HIGH' region signature appears at 42-51; it reads PTAPDIHLGH. Residues 226–230 carry the 'KMSKS' region motif; the sequence is KMSKS. Lysine 229 lines the ATP pocket. The region spanning 334-394 is the S4 RNA-binding domain; it reads MGLATLLKEA…GKRKFARVRL (61 aa).

This sequence belongs to the class-I aminoacyl-tRNA synthetase family. TyrS type 2 subfamily. As to quaternary structure, homodimer.

The protein localises to the cytoplasm. The enzyme catalyses tRNA(Tyr) + L-tyrosine + ATP = L-tyrosyl-tRNA(Tyr) + AMP + diphosphate + H(+). In terms of biological role, catalyzes the attachment of tyrosine to tRNA(Tyr) in a two-step reaction: tyrosine is first activated by ATP to form Tyr-AMP and then transferred to the acceptor end of tRNA(Tyr). This is Tyrosine--tRNA ligase from Haemophilus influenzae (strain ATCC 51907 / DSM 11121 / KW20 / Rd).